A 465-amino-acid polypeptide reads, in one-letter code: Argininosuccinate lyase (465 aa).

This sequence belongs to the lyase 1 family. Argininosuccinate lyase subfamily.

The protein localises to the cytoplasm. The catalysed reaction is 2-(N(omega)-L-arginino)succinate = fumarate + L-arginine. It functions in the pathway amino-acid biosynthesis; L-arginine biosynthesis; L-arginine from L-ornithine and carbamoyl phosphate: step 3/3. This chain is Argininosuccinate lyase, found in Deinococcus geothermalis (strain DSM 11300 / CIP 105573 / AG-3a).